The chain runs to 172 residues: Transcriptional repressor NrdR (172 aa).

Residues 3–34 (CPFCRHPDSRVVDSRTTDDGTSIRRRRQCPDC) fold into a zinc finger. Residues 46 to 136 (LMVIKRSGVT…VYRAFDSLED (91 aa)) enclose the ATP-cone domain. The disordered stretch occupies residues 152 to 172 (ERSGGGTCGTGTVPVPAGTAD). Over residues 161–172 (TGTVPVPAGTAD) the composition is skewed to low complexity.

It belongs to the NrdR family. It depends on Zn(2+) as a cofactor.

Functionally, negatively regulates transcription of bacterial ribonucleotide reductase nrd genes and operons by binding to NrdR-boxes. This chain is Transcriptional repressor NrdR, found in Streptomyces clavuligerus.